The primary structure comprises 185 residues: Ribosome-recycling factor (185 aa).

It belongs to the RRF family.

It is found in the cytoplasm. Its function is as follows. Responsible for the release of ribosomes from messenger RNA at the termination of protein biosynthesis. May increase the efficiency of translation by recycling ribosomes from one round of translation to another. The sequence is that of Ribosome-recycling factor from Shewanella halifaxensis (strain HAW-EB4).